The chain runs to 113 residues: UPF0122 protein PEPE_0845 (113 aa).

It belongs to the UPF0122 family.

Its function is as follows. Might take part in the signal recognition particle (SRP) pathway. This is inferred from the conservation of its genetic proximity to ftsY/ffh. May be a regulatory protein. The polypeptide is UPF0122 protein PEPE_0845 (Pediococcus pentosaceus (strain ATCC 25745 / CCUG 21536 / LMG 10740 / 183-1w)).